The primary structure comprises 655 residues: Acetyl-coenzyme A synthetase (655 aa).

Residues 196 to 199 (RGGK) and Thr-316 each bind CoA. ATP is bound by residues 392-394 (GEP), 416-421 (DTWWQT), Asp-507, and Arg-522. Ser-530 contributes to the CoA binding site. Arg-533 is a binding site for ATP. Mg(2+) is bound by residues Val-544 and Val-549. Lys-619 bears the N6-acetyllysine mark.

Belongs to the ATP-dependent AMP-binding enzyme family. The cofactor is Mg(2+). In terms of processing, acetylated. Deacetylation by the SIR2-homolog deacetylase activates the enzyme.

The catalysed reaction is acetate + ATP + CoA = acetyl-CoA + AMP + diphosphate. Functionally, catalyzes the conversion of acetate into acetyl-CoA (AcCoA), an essential intermediate at the junction of anabolic and catabolic pathways. AcsA undergoes a two-step reaction. In the first half reaction, AcsA combines acetate with ATP to form acetyl-adenylate (AcAMP) intermediate. In the second half reaction, it can then transfer the acetyl group from AcAMP to the sulfhydryl group of CoA, forming the product AcCoA. The polypeptide is Acetyl-coenzyme A synthetase (Thiobacillus denitrificans (strain ATCC 25259 / T1)).